The following is an 871-amino-acid chain: DNA mismatch repair protein MutS (871 aa).

ATP is bound at residue 605-612 (GPNMGGKS). The tract at residues 791–840 (PQRPTSASVEQPVDSAKTETAATAEEPQQLSLFPTDEETKPKQPTKKERS) is disordered. Residues 827–840 (EETKPKQPTKKERS) are compositionally biased toward basic and acidic residues.

It belongs to the DNA mismatch repair MutS family.

Functionally, this protein is involved in the repair of mismatches in DNA. It is possible that it carries out the mismatch recognition step. This protein has a weak ATPase activity. In Shouchella clausii (strain KSM-K16) (Alkalihalobacillus clausii), this protein is DNA mismatch repair protein MutS.